A 92-amino-acid polypeptide reads, in one-letter code: Large ribosomal subunit protein eL43 (92 aa).

The segment at 39-60 adopts a C4-type zinc-finger fold; that stretch reads CEFCGKFAVKRKAVGIWGCKDC.

It belongs to the eukaryotic ribosomal protein eL43 family.

This Pseudotsuga menziesii (Douglas-fir) protein is Large ribosomal subunit protein eL43 (RPL37A).